The primary structure comprises 169 residues: Protein yop1 (169 aa).

Topologically, residues 1–35 (MASFQDRAQHTIAQLDKELSKYPVLNNLERQTSVP) are cytoplasmic. The helical transmembrane segment at 36 to 55 (KVYVILGLGGIYTFLVFFNI) threads the bilayer. Position 56 (Ala-56) is a topological domain, lumenal. Residues 57-76 (GQLLVNLAGFILPTYYSLDA) traverse the membrane as a helical segment. The Cytoplasmic portion of the chain corresponds to 77–88 (LFSAGKADDTQW). Residues 89–103 (LTYWVVYAFFTVVES) form a helical membrane-spanning segment. Residues 104–105 (AI) are Lumenal-facing. Residues 106–124 (SAPYWFPFYYIFKFALVLW) form a helical membrane-spanning segment. Residues 125–169 (LALPQTNGAQIVFKSLVQPLVGRYFTGGSTSANLRAQADAATKSQ) are Cytoplasmic-facing.

Belongs to the DP1 family. Oligomer.

It localises to the endoplasmic reticulum membrane. The protein resides in the golgi apparatus membrane. Required to generate and maintain the structure of the tubular endoplasmic reticulum network and the vacuole. Induces high curvature in membranes and causes membrane tubule formation. Involved in membrane/vesicle trafficking. This chain is Protein yop1 (yop1), found in Emericella nidulans (strain FGSC A4 / ATCC 38163 / CBS 112.46 / NRRL 194 / M139) (Aspergillus nidulans).